We begin with the raw amino-acid sequence, 449 residues long: Tubulin alpha-8 chain (449 aa).

Positions 1-4 match the MREC motif motif; the sequence is MREC. GTP contacts are provided by Gln11, Glu71, Ser140, Gly144, Thr145, Thr179, Asn206, and Asn228. Glu71 contributes to the Mg(2+) binding site. The active site involves Glu254.

Belongs to the tubulin family. Dimer of alpha and beta chains. A typical microtubule is a hollow water-filled tube with an outer diameter of 25 nm and an inner diameter of 15 nM. Alpha-beta heterodimers associate head-to-tail to form protofilaments running lengthwise along the microtubule wall with the beta-tubulin subunit facing the microtubule plus end conferring a structural polarity. Microtubules usually have 13 protofilaments but different protofilament numbers can be found in some organisms and specialized cells. The cofactor is Mg(2+). In terms of processing, some glutamate residues at the C-terminus are polyglycylated, resulting in polyglycine chains on the gamma-carboxyl group. Glycylation is mainly limited to tubulin incorporated into axonemes (cilia and flagella) whereas glutamylation is prevalent in neuronal cells, centrioles, axonemes, and the mitotic spindle. Both modifications can coexist on the same protein on adjacent residues, and lowering polyglycylation levels increases polyglutamylation, and reciprocally. Cilia and flagella glycylation is required for their stability and maintenance. Flagella glycylation controls sperm motility. Some glutamate residues at the C-terminus are polyglutamylated, resulting in polyglutamate chains on the gamma-carboxyl group. Polyglutamylation plays a key role in microtubule severing by spastin (SPAST). SPAST preferentially recognizes and acts on microtubules decorated with short polyglutamate tails: severing activity by SPAST increases as the number of glutamates per tubulin rises from one to eight, but decreases beyond this glutamylation threshold. Glutamylation is also involved in cilia motility. Post-translationally, the C-terminal phenylalanine residue is cleaved by MATCAP1/KIAA0895L.

Its subcellular location is the cytoplasm. The protein resides in the cytoskeleton. It carries out the reaction GTP + H2O = GDP + phosphate + H(+). Tubulin is the major constituent of microtubules, a cylinder consisting of laterally associated linear protofilaments composed of alpha- and beta-tubulin heterodimers. Microtubules grow by the addition of GTP-tubulin dimers to the microtubule end, where a stabilizing cap forms. Below the cap, tubulin dimers are in GDP-bound state, owing to GTPase activity of alpha-tubulin. The sequence is that of Tubulin alpha-8 chain (Tuba8) from Rattus norvegicus (Rat).